The chain runs to 1060 residues: Carbamoyl phosphate synthase large chain (1060 aa).

The interval 1-401 is carboxyphosphate synthetic domain; it reads MPKRTDIRKI…SLLKACRSLE (401 aa). Residues R129, R169, G175, G176, R208, I210, E215, G241, I242, H243, Q284, and E298 each contribute to the ATP site. Residues 133–327 enclose the ATP-grasp 1 domain; that stretch reads KQLMEELNQP…IAKLAAKIAV (195 aa). Mg(2+) contacts are provided by Q284, E298, and N300. Residues Q284, E298, and N300 each coordinate Mn(2+). The interval 402-546 is oligomerization domain; it reads IGVDHIKIAD…YSTYAVENES (145 aa). The tract at residues 547–929 is carbamoyl phosphate synthetic domain; the sequence is LISDKASILV…ALYKAFEAAY (383 aa). Positions 671–861 constitute an ATP-grasp 2 domain; that stretch reads EATLQALNIP…MAQVATKVIL (191 aa). 10 residues coordinate ATP: R707, A746, L748, E752, G777, V778, H779, S780, Q820, and E832. Mg(2+) is bound by residues Q820, E832, and N834. Mn(2+) contacts are provided by Q820, E832, and N834. Positions 930-1060 constitute an MGS-like domain; that stretch reads LHMPDYGNIV…SRAFTLKVLD (131 aa). The interval 930 to 1060 is allosteric domain; the sequence is LHMPDYGNIV…SRAFTLKVLD (131 aa).

Belongs to the CarB family. In terms of assembly, composed of two chains; the small (or glutamine) chain promotes the hydrolysis of glutamine to ammonia, which is used by the large (or ammonia) chain to synthesize carbamoyl phosphate. Tetramer of heterodimers (alpha,beta)4. It depends on Mg(2+) as a cofactor. Mn(2+) serves as cofactor.

The catalysed reaction is hydrogencarbonate + L-glutamine + 2 ATP + H2O = carbamoyl phosphate + L-glutamate + 2 ADP + phosphate + 2 H(+). It catalyses the reaction hydrogencarbonate + NH4(+) + 2 ATP = carbamoyl phosphate + 2 ADP + phosphate + 2 H(+). The protein operates within amino-acid biosynthesis; L-arginine biosynthesis; carbamoyl phosphate from bicarbonate: step 1/1. It functions in the pathway pyrimidine metabolism; UMP biosynthesis via de novo pathway; (S)-dihydroorotate from bicarbonate: step 1/3. In terms of biological role, large subunit of the glutamine-dependent carbamoyl phosphate synthetase (CPSase). CPSase catalyzes the formation of carbamoyl phosphate from the ammonia moiety of glutamine, carbonate, and phosphate donated by ATP, constituting the first step of 2 biosynthetic pathways, one leading to arginine and/or urea and the other to pyrimidine nucleotides. The large subunit (synthetase) binds the substrates ammonia (free or transferred from glutamine from the small subunit), hydrogencarbonate and ATP and carries out an ATP-coupled ligase reaction, activating hydrogencarbonate by forming carboxy phosphate which reacts with ammonia to form carbamoyl phosphate. The chain is Carbamoyl phosphate synthase large chain from Streptococcus agalactiae serotype V (strain ATCC BAA-611 / 2603 V/R).